The primary structure comprises 375 residues: Trichodiene synthase (375 aa).

It belongs to the trichodiene synthase family.

It catalyses the reaction (2E,6E)-farnesyl diphosphate = trichodiene + diphosphate. Its pathway is sesquiterpene biosynthesis; trichothecene biosynthesis. Functionally, TS is a member of the terpene cyclase group of enzymes. It catalyzes the isomerization and cyclization of farnesyl pyro-phosphate to form trichodiene, the first cyclic intermediate in the biosynthetic pathway for trichothecenes. It serves to branch trichothecene biosynthesis from the isoprenoid pathway. This Fusarium mesoamericanum protein is Trichodiene synthase (TRI5).